The following is a 235-amino-acid chain: Protein CIST1 (235 aa).

An N-terminal signal peptide occupies residues 1–31; that stretch reads MASSQPPLPPPPPPLLLLALLLLLKVSDTSS. Composition is skewed to low complexity over residues 28–61 and 76–110; these read DTSSSVSTATSTASETDNLTSKPLTSSFSSSSPT and STSHPDSSSSESTISHSPSNSGTTSTTQPTSSQPE. The tract at residues 28-159 is disordered; the sequence is DTSSSVSTAT…TGPPSVSLAT (132 aa). The Extracellular portion of the chain corresponds to 32–184; it reads SVSTATSTAS…GVPRLHRNPG (153 aa). Asn-45 carries N-linked (GlcNAc...) asparagine glycosylation. The segment covering 114-136 has biased composition (polar residues); it reads HPSSGSPSSEHTVTSPSLGSVSL. The chain crosses the membrane as a helical span at residues 185–205; the sequence is VVVAVCLLVSALLIGGAIMAV. Over 206-235 the chain is Cytoplasmic; sequence RRCHNGVSEFQKLDEGLVSRRSSSAHHTLP.

As to expression, highly expressed in large intestine, small intestine, rumen, and kidney tissues.

It is found in the membrane. The chain is Protein CIST1 (CIST1) from Bos taurus (Bovine).